Reading from the N-terminus, the 399-residue chain is Ubiquitin-like modifier-activating enzyme 5 (399 aa).

Residues Gly76, Asp97, Lys120, Asn143, and Asn177 each coordinate ATP. Positions 219 and 222 each coordinate Zn(2+). Residue Cys243 is the Glycyl thioester intermediate of the active site. 2 residues coordinate Zn(2+): Cys296 and Cys301.

The protein belongs to the ubiquitin-activating E1 family. UBA5 subfamily.

E1-like enzyme which activates UFM1. This chain is Ubiquitin-like modifier-activating enzyme 5, found in Drosophila mojavensis (Fruit fly).